A 522-amino-acid chain; its full sequence is Glutathione reductase, mitochondrial (522 aa).

Residues 1–43 (MALLPRALSSGGRPSWRRAARASRGFPLPLPFPAAATHALSRA) constitute a mitochondrion transit peptide. Positions 74 and 75 each coordinate FAD. Serine 74 lines the glutathione pocket. Arginine 81 is a binding site for glutathione. Glutamate 94 is an FAD binding site. Lysine 97 is modified (N6-acetyllysine). Threonine 101, cysteine 102, and lysine 110 together coordinate FAD. A disulfide bridge connects residues cysteine 102 and cysteine 107. Position 158 (tyrosine 158) interacts with glutathione. Alanine 174 is an FAD binding site. Residues alanine 239, isoleucine 242, glutamate 245, arginine 262, arginine 268, and glycine 334 each contribute to the NADP(+) site. FAD is bound at residue aspartate 375. Position 381 (leucine 381) interacts with NADP(+). Threonine 383 contributes to the FAD binding site. Arginine 391 provides a ligand contact to glutathione. Valine 414 contributes to the NADP(+) binding site. Position 511 (histidine 511) interacts with FAD. The Proton acceptor role is filled by histidine 511.

Belongs to the class-I pyridine nucleotide-disulfide oxidoreductase family. In terms of assembly, homodimer; disulfide-linked. FAD serves as cofactor.

The protein resides in the mitochondrion. Its subcellular location is the cytoplasm. It carries out the reaction 2 glutathione + NADP(+) = glutathione disulfide + NADPH + H(+). In terms of biological role, catalyzes the reduction of glutathione disulfide (GSSG) to reduced glutathione (GSH). Constitutes the major mechanism to maintain a high GSH:GSSG ratio in the cytosol. The sequence is that of Glutathione reductase, mitochondrial (GSR) from Callithrix jacchus (White-tufted-ear marmoset).